Consider the following 302-residue polypeptide: tRNA pseudouridine synthase B (302 aa).

Asp45 acts as the Nucleophile in catalysis.

The protein belongs to the pseudouridine synthase TruB family. Type 1 subfamily.

The catalysed reaction is uridine(55) in tRNA = pseudouridine(55) in tRNA. Its function is as follows. Responsible for synthesis of pseudouridine from uracil-55 in the psi GC loop of transfer RNAs. This is tRNA pseudouridine synthase B from Francisella tularensis subsp. holarctica (strain FTNF002-00 / FTA).